We begin with the raw amino-acid sequence, 420 residues long: Exodeoxyribonuclease 7 large subunit (420 aa).

The protein belongs to the XseA family. Heterooligomer composed of large and small subunits.

The protein localises to the cytoplasm. It catalyses the reaction Exonucleolytic cleavage in either 5'- to 3'- or 3'- to 5'-direction to yield nucleoside 5'-phosphates.. In terms of biological role, bidirectionally degrades single-stranded DNA into large acid-insoluble oligonucleotides, which are then degraded further into small acid-soluble oligonucleotides. The chain is Exodeoxyribonuclease 7 large subunit from Helicobacter pylori (strain Shi470).